The chain runs to 241 residues: Guanosine phosphorylase (241 aa).

It belongs to the PNP/UDP phosphorylase family.

The catalysed reaction is guanosine + phosphate = alpha-D-ribose 1-phosphate + guanine. The enzyme catalyses a purine D-ribonucleoside + phosphate = a purine nucleobase + alpha-D-ribose 1-phosphate. It catalyses the reaction inosine + phosphate = alpha-D-ribose 1-phosphate + hypoxanthine. It carries out the reaction adenosine + phosphate = alpha-D-ribose 1-phosphate + adenine. Its activity is regulated as follows. Activity is higher at low KCl concentrations. Its function is as follows. Phosphorylase involved in the non-carboxylating pentose bisphosphate pathway, a nucleoside degradation pathway present in some halophilic archaea. Catalyzes the phosphorolytic cleavage of guanosine to guanine and ribose-1-phosphate (R1P). Exhibits the highest activity toward guanosine, but also shows lower activity against inosine and adenosine. The sequence is that of Guanosine phosphorylase from Halorubrum lacusprofundi (strain ATCC 49239 / DSM 5036 / JCM 8891 / ACAM 34).